The primary structure comprises 168 residues: UPF0304 protein MJECS11 (168 aa).

The protein belongs to the UPF0304 family.

The polypeptide is UPF0304 protein MJECS11 (Methanocaldococcus jannaschii (strain ATCC 43067 / DSM 2661 / JAL-1 / JCM 10045 / NBRC 100440) (Methanococcus jannaschii)).